A 162-amino-acid chain; its full sequence is Phycoerythrocyanin alpha chain (162 aa).

A (15Z)-phycoviolobilin-binding site is contributed by Cys-84.

Belongs to the phycobiliprotein family. As to quaternary structure, heterodimer of an alpha and a beta chain. Contains one covalently linked bilin chromophore.

The protein resides in the cellular thylakoid membrane. Its function is as follows. Light-harvesting photosynthetic bile pigment-protein from the phycobiliprotein complex. The protein is Phycoerythrocyanin alpha chain (pecA) of Nostoc sp. (strain PCC 7120 / SAG 25.82 / UTEX 2576).